A 329-amino-acid chain; its full sequence is GTP 3',8-cyclase (329 aa).

The 227-residue stretch at 8–234 (AFARKFYYLR…QLRQRSDGPA (227 aa)) folds into the Radical SAM core domain. R17 contributes to the GTP binding site. [4Fe-4S] cluster is bound by residues C24 and C28. Y30 contributes to the S-adenosyl-L-methionine binding site. C31 lines the [4Fe-4S] cluster pocket. R68 lines the GTP pocket. Residue G72 coordinates S-adenosyl-L-methionine. T99 serves as a coordination point for GTP. S123 serves as a coordination point for S-adenosyl-L-methionine. GTP is bound at residue K160. M194 lines the S-adenosyl-L-methionine pocket. Residues C257 and C260 each contribute to the [4Fe-4S] cluster site. 262 to 264 (RLR) contacts GTP. C274 is a binding site for [4Fe-4S] cluster.

This sequence belongs to the radical SAM superfamily. MoaA family. Monomer and homodimer. It depends on [4Fe-4S] cluster as a cofactor.

The catalysed reaction is GTP + AH2 + S-adenosyl-L-methionine = (8S)-3',8-cyclo-7,8-dihydroguanosine 5'-triphosphate + 5'-deoxyadenosine + L-methionine + A + H(+). The protein operates within cofactor biosynthesis; molybdopterin biosynthesis. In terms of biological role, catalyzes the cyclization of GTP to (8S)-3',8-cyclo-7,8-dihydroguanosine 5'-triphosphate. This is GTP 3',8-cyclase from Escherichia coli O45:K1 (strain S88 / ExPEC).